Reading from the N-terminus, the 597-residue chain is DDB1- and CUL4-associated factor 8 (597 aa).

Residues 1-24 are compositionally biased toward polar residues; sequence MSSKGSSTDGRTDLANGSLSSSPE. The tract at residues 1 to 147 is disordered; it reads MSSKGSSTDG…DWVSSETSAL (147 aa). A phosphoserine mark is found at S21 and S22. Positions 39-50 match the Nuclear export signal motif; the sequence is IEVEASDLSLSL. Basic and acidic residues predominate over residues 65–99; it reads RGTDTESSGEDKDSDSMEDTGHYSINDENRVHDRS. The residue at position 99 (S99) is a Phosphoserine. Residues 100 to 112 show a composition bias toward acidic residues; it reads EEEEEEEEEEEEE. A Nuclear localization signal motif is present at residues 114-122; the sequence is PRRRVQRKR. The segment covering 124-137 has biased composition (basic and acidic residues); sequence NRDQDSSDDERALE. Residues S129 and S130 each carry the phosphoserine modification. WD repeat units lie at residues 191-230, 234-275, 281-321, 329-369, 385-424, 432-472, and 476-515; these read GHTG…PVLD, GHKS…CCKN, QHKG…PASK, EKKV…ENEN, ESKA…GAQY, RNNA…IIQF, and DKGG…STEL. Residue R204 is modified to Omega-N-methylarginine; by PRMT1. Residues 558–597 form a disordered region; sequence HRRWREPGVGATDADSDESPSSSDTSDEEEGPDRVQCMPS.

The protein belongs to the WD repeat DCAF8 family. In terms of assembly, interacts with DDB1, CUL4A and CUL4B. Interacts with KPNA1, KPNB1 and XPO1.

It is found in the nucleus. Its subcellular location is the cytoplasm. The protein operates within protein modification; protein ubiquitination. Its function is as follows. May function as a substrate receptor for CUL4-DDB1 E3 ubiquitin-protein ligase complex. This Homo sapiens (Human) protein is DDB1- and CUL4-associated factor 8 (DCAF8).